The chain runs to 414 residues: Serine hydroxymethyltransferase (414 aa).

Residues Leu-116 and 120 to 122 contribute to the (6S)-5,6,7,8-tetrahydrofolate site; that span reads GHL. Residue Lys-224 is modified to N6-(pyridoxal phosphate)lysine. Residues Glu-240 and 348 to 350 each bind (6S)-5,6,7,8-tetrahydrofolate; that span reads SPF.

The protein belongs to the SHMT family. As to quaternary structure, homodimer. The cofactor is pyridoxal 5'-phosphate.

The protein localises to the cytoplasm. The enzyme catalyses (6R)-5,10-methylene-5,6,7,8-tetrahydrofolate + glycine + H2O = (6S)-5,6,7,8-tetrahydrofolate + L-serine. It functions in the pathway one-carbon metabolism; tetrahydrofolate interconversion. The protein operates within amino-acid biosynthesis; glycine biosynthesis; glycine from L-serine: step 1/1. Catalyzes the reversible interconversion of serine and glycine with tetrahydrofolate (THF) serving as the one-carbon carrier. This reaction serves as the major source of one-carbon groups required for the biosynthesis of purines, thymidylate, methionine, and other important biomolecules. Also exhibits THF-independent aldolase activity toward beta-hydroxyamino acids, producing glycine and aldehydes, via a retro-aldol mechanism. The protein is Serine hydroxymethyltransferase of Campylobacter jejuni subsp. jejuni serotype O:2 (strain ATCC 700819 / NCTC 11168).